Here is a 240-residue protein sequence, read N- to C-terminus: Uridylate kinase (240 aa).

12–15 serves as a coordination point for ATP; sequence KLSG. The interval 20 to 25 is involved in allosteric activation by GTP; the sequence is GEDGFG. Gly54 contributes to the UMP binding site. ATP-binding residues include Gly55 and Arg59. Residues Asp74 and 135 to 142 contribute to the UMP site; that span reads TGNPYFST. ATP contacts are provided by Asn163, Tyr169, and Asp172.

It belongs to the UMP kinase family. Homohexamer.

It is found in the cytoplasm. It carries out the reaction UMP + ATP = UDP + ADP. The protein operates within pyrimidine metabolism; CTP biosynthesis via de novo pathway; UDP from UMP (UMPK route): step 1/1. With respect to regulation, allosterically activated by GTP. Probably inhibited by UTP. In terms of biological role, catalyzes the reversible phosphorylation of UMP to UDP. In Enterococcus faecalis (strain ATCC 700802 / V583), this protein is Uridylate kinase (pyrH).